The primary structure comprises 461 residues: V-type ATP synthase beta chain (461 aa).

It belongs to the ATPase alpha/beta chains family.

In terms of biological role, produces ATP from ADP in the presence of a proton gradient across the membrane. The V-type beta chain is a regulatory subunit. This is V-type ATP synthase beta chain from Clostridium botulinum (strain Kyoto / Type A2).